Reading from the N-terminus, the 196-residue chain is Homeobox protein XENK-2 (196 aa).

The disordered stretch occupies residues 48–72 (PSADESPDNDKELSSNPDSGKKRKR). A DNA-binding region (homeobox) is located at residues 69 to 128 (KRKRRVLFSKAQTYELERRFRQQRYLSAPEREHLASLIRLTPTQVKIWFQNHRYKMKRAR).

This sequence belongs to the NK-2 homeobox family. As to expression, forebrain and midbrain.

The protein resides in the nucleus. Defines dorsal-ventral domains in developing brain. May play a role in defining positional information along the anterior-posterior (a/p) axis and the dorsal-ventral (d/v) axis of the developing nervous system. May be involved in determining positional or boundary information rather than determining a given cell type. The chain is Homeobox protein XENK-2 from Xenopus laevis (African clawed frog).